Reading from the N-terminus, the 702-residue chain is Ribosomal RNA large subunit methyltransferase K/L (702 aa).

One can recognise a THUMP domain in the interval 43-154 (LVYQSLMWSR…KETASIALDL (112 aa)).

Belongs to the methyltransferase superfamily. RlmKL family.

The protein resides in the cytoplasm. The enzyme catalyses guanosine(2445) in 23S rRNA + S-adenosyl-L-methionine = N(2)-methylguanosine(2445) in 23S rRNA + S-adenosyl-L-homocysteine + H(+). It carries out the reaction guanosine(2069) in 23S rRNA + S-adenosyl-L-methionine = N(2)-methylguanosine(2069) in 23S rRNA + S-adenosyl-L-homocysteine + H(+). Specifically methylates the guanine in position 2445 (m2G2445) and the guanine in position 2069 (m7G2069) of 23S rRNA. This is Ribosomal RNA large subunit methyltransferase K/L from Escherichia coli (strain SMS-3-5 / SECEC).